A 214-amino-acid polypeptide reads, in one-letter code: Vascular endothelial growth factor A (214 aa).

The N-terminal stretch at 1–26 is a signal peptide; sequence MNFLLSWVHWTLALLLYLHHAKWSQA. Disulfide bonds link cysteine 51/cysteine 93, cysteine 82/cysteine 127, and cysteine 86/cysteine 129. A glycan (N-linked (GlcNAc...) asparagine) is linked at asparagine 100. Over residues 131 to 142 the composition is skewed to basic and acidic residues; the sequence is PKKDRTKPEKKS. Positions 131 to 159 are disordered; it reads PKKDRTKPEKKSVRGKGKGQKRKRKKSRF. The segment covering 143 to 159 has biased composition (basic residues); that stretch reads VRGKGKGQKRKRKKSRF.

The protein belongs to the PDGF/VEGF growth factor family. As to quaternary structure, homodimer; disulfide-linked. Also found as heterodimer with PGF. Interacts with NRP1. Interacts with isoform 2 of BSG. Interacts with CD82; this interaction inhibits VEGFA-mediated signaling pathway. In terms of tissue distribution, expressed in the pituitary, in brain, in particularly in supraoptic and paraventricular nuclei and the choroid plexus. Also found abundantly in the corpus luteum of the ovary and in kidney glomeruli. Expressed in the ductal epithelial cells of post-pubertal mammary glands. Expressed in the ductal and alveolar epithelial cells throughout the whole period of gestational evolution, lactation and involution.

The protein resides in the secreted. Growth factor active in angiogenesis, vasculogenesis and endothelial cell growth. Induces endothelial cell proliferation, promotes cell migration, inhibits apoptosis and induces permeabilization of blood vessels. Binds to the FLT1/VEGFR1 and KDR/VEGFR2 receptors, heparan sulfate and heparin. May play a role in increasing vascular permeability during lactation, when increased transport of molecules from the blood is required for efficient milk protein synthesis. Binding to NRP1 receptor initiates a signaling pathway needed for motor neuron axon guidance and cell body migration, including for the caudal migration of facial motor neurons from rhombomere 4 to rhombomere 6 during embryonic development. Also binds the DEAR/FBXW7-AS1 receptor. The chain is Vascular endothelial growth factor A (Vegfa) from Rattus norvegicus (Rat).